The chain runs to 142 residues: MAVKIRLKRMGKIRDPRYRVVVVDSRKKRDGRVIEEVGVYQPTENPSYINLVSDRVQYWLGVGAQPSEAVLALMKITGDWQKFKGLPGAEGTLRQPEGKTPFVAPDNGSVIIPEAITPKAEKAEEAPAEDAAPAEDDAEKAE.

Positions 88-142 (GAEGTLRQPEGKTPFVAPDNGSVIIPEAITPKAEKAEEAPAEDAAPAEDDAEKAE) are disordered. A compositionally biased stretch (acidic residues) spans 126–142 (APAEDAAPAEDDAEKAE).

Belongs to the bacterial ribosomal protein bS16 family.

The chain is Small ribosomal subunit protein bS16 from Kocuria rhizophila (strain ATCC 9341 / DSM 348 / NBRC 103217 / DC2201).